The sequence spans 689 residues: Chloride channel protein ClC-Kb (689 aa).

Residues 1 to 51 (MSRVLVIEQREGEEKTLIQKHIFRPFPNTRRVVIDHLQRLKNFLFRIGDDW) lie on the Cytoplasmic side of the membrane. A run of 2 helical transmembrane segments spans residues 52 to 83 (YFLFALGVIMALISFTMDFTVSKMLNAHRWLQ) and 92 to 112 (LRYLSWIVYPIALVAFSTGFA). Positions 117-128 (PHSGGSGIPELK) form an intramembrane region, helical. Ser122 contacts chloride. 2 consecutive transmembrane segments (helical) span residues 142-161 (IKNFGAKVVGLTCTLSAGST) and 162-181 (MFLGKVGPFVHLSSMIAAYL). An N-linked (GlcNAc...) asparagine glycan is attached at Asn194. Residues 204-225 (AAAAVGVSTVFGAPISGVLFSV) constitute an intramembrane region (helical). Residues 237-256 (YWRGFFAATCGAFVFRLLAV) traverse the membrane as a helical segment. The Ca(2+) site is built by Glu260, Glu262, Asp279, and Glu282. 2 helical membrane passes run 283-311 (MFFFAILGVVCGLIGCAYLFCQRWLLGYV) and 326-343 (PMYSALVALLISSITFPE). Positions 350 to 361 (ASRLTMKELLTS) form an intramembrane region, helical. A run of 2 helical transmembrane segments spans residues 402-422 (GTLAFFIIMKFWMFILATTLP) and 423-442 (MPAGYFMPVFVFGAAIGRLV). A chloride-binding site is contributed by Phe428. An intramembrane region (helical) is located at residues 466–498 (GGYAWQGAPAYSGAVTHSVSTALLAFEATGQIA). A helical transmembrane segment spans residues 502–522 (PVILCVLIANAFTQKLQPSFY). Topologically, residues 523-689 (DGTIIVKKLP…KAIEDLANPK (167 aa)) are cytoplasmic. CBS domains are found at residues 553 to 613 (MNPD…SHER) and 630 to 689 (ACSI…ANPK).

This sequence belongs to the chloride channel (TC 2.A.49) family. N-glycosylated on a single asparagine, probably Asn-365 or Asn-375. In terms of tissue distribution, expressed in two distinct regions of the kidney; the proximal convoluted tubule and the diluting segment.

The protein resides in the cell membrane. Its function is as follows. Voltage-gated chloride channel. Chloride channels have several functions including the regulation of cell volume, the stabilization of membrane potential, signal transduction and transepithelial transport. The polypeptide is Chloride channel protein ClC-Kb (clcnkb) (Xenopus laevis (African clawed frog)).